The primary structure comprises 401 residues: Argininosuccinate synthase (401 aa).

Residues 10–18 and A38 each bind ATP; that span reads AYSGGVDTS. Residue Y89 coordinates L-citrulline. G119 is a binding site for ATP. The L-aspartate site is built by T121, N125, and D126. N125 is a binding site for L-citrulline. L-citrulline-binding residues include R129, S177, S186, E262, and Y274.

It belongs to the argininosuccinate synthase family. Type 1 subfamily. In terms of assembly, homotetramer.

It localises to the cytoplasm. It carries out the reaction L-citrulline + L-aspartate + ATP = 2-(N(omega)-L-arginino)succinate + AMP + diphosphate + H(+). The protein operates within amino-acid biosynthesis; L-arginine biosynthesis; L-arginine from L-ornithine and carbamoyl phosphate: step 2/3. The sequence is that of Argininosuccinate synthase from Prochlorococcus marinus (strain MIT 9313).